The primary structure comprises 292 residues: Small ribosomal subunit protein uS9m (292 aa).

Residues 273 to 292 (VERKKPGKRKARKMPTWVKR) form a disordered region.

Belongs to the universal ribosomal protein uS9 family.

It localises to the mitochondrion. The polypeptide is Small ribosomal subunit protein uS9m (MRPS9) (Kluyveromyces marxianus (Yeast)).